A 354-amino-acid polypeptide reads, in one-letter code: Chaperone protein dnaJ 49 (354 aa).

Residues 99–163 enclose the J domain; it reads DYYAILGLEK…NSRRQFDQVG (65 aa). The chain crosses the membrane as a helical span at residues 237–257; sequence CLTIIQILPFFLLLLLAYLPF.

It belongs to the DnaJ family. C/III subfamily.

It localises to the membrane. Functionally, plays a continuous role in plant development probably in the structural organization of compartments. In Arabidopsis thaliana (Mouse-ear cress), this protein is Chaperone protein dnaJ 49 (ATJ49).